We begin with the raw amino-acid sequence, 464 residues long: Glutamate decarboxylase (464 aa).

Lys-274 is subject to N6-(pyridoxal phosphate)lysine.

Belongs to the group II decarboxylase family. Pyridoxal 5'-phosphate serves as cofactor.

The enzyme catalyses L-glutamate + H(+) = 4-aminobutanoate + CO2. Its function is as follows. Catalyzes the pyridoxal-dependent decarboxylation of glutamate to produce 4-aminobutanoate. Has weak activity with aspartate, but cannot complement an E.coli panD deletion mutant. This chain is Glutamate decarboxylase, found in Aliivibrio fischeri (strain ATCC 700601 / ES114) (Vibrio fischeri).